Here is a 344-residue protein sequence, read N- to C-terminus: NAD-dependent alcohol dehydrogenase (344 aa).

C38, H66, D96, C99, C102, C110, and C152 together coordinate Zn(2+).

This sequence belongs to the zinc-containing alcohol dehydrogenase family. In terms of assembly, homodimer and homotetramer. Zn(2+) is required as a cofactor.

It catalyses the reaction a primary alcohol + NAD(+) = an aldehyde + NADH + H(+). The enzyme catalyses a secondary alcohol + NAD(+) = a ketone + NADH + H(+). The polypeptide is NAD-dependent alcohol dehydrogenase (adh) (Sulfolobus acidocaldarius (strain ATCC 33909 / DSM 639 / JCM 8929 / NBRC 15157 / NCIMB 11770)).